A 334-amino-acid chain; its full sequence is MKVKVGVNGYGTIGKRVAYAITKQDDMELVGVVKTKPDFEAYRAKELGIPVYAANEEFLSRFESVGFEVEGTLNDLLEKVDVIVDATPGGVGAKNKPLYEKAGVKAVFQGGEKANVAEVSFVAQANYEKALGKSYVRVVSCNTTGLVRTLNAIREYADYVYAVMIRRAADPNDIKRGPINAIKPSVEVPSHHGPDVQTVIPINIETMAFVVPTTIMHVHSVMVELKKPLTREDVIDIFENTTRVLLFEKEKGFESTAQIIEFARDLHREWNNLYEIAVWKESINVKGNRLYYIQAVHQESDVVPENVDAIRAMFELADKEESIKKTNKSLGILK.

Residues 12 to 13 (TI) and Gly-111 each bind NAD(+). 140 to 142 (SCN) provides a ligand contact to D-glyceraldehyde 3-phosphate. Catalysis depends on Cys-141, which acts as the Nucleophile. Arg-167 provides a ligand contact to NAD(+). 192-193 (HG) serves as a coordination point for D-glyceraldehyde 3-phosphate. NAD(+) is bound at residue Gln-298.

The protein belongs to the glyceraldehyde-3-phosphate dehydrogenase family. Homotetramer.

It is found in the cytoplasm. It catalyses the reaction D-glyceraldehyde 3-phosphate + phosphate + NADP(+) = (2R)-3-phospho-glyceroyl phosphate + NADPH + H(+). The enzyme catalyses D-glyceraldehyde 3-phosphate + phosphate + NAD(+) = (2R)-3-phospho-glyceroyl phosphate + NADH + H(+). The protein operates within carbohydrate degradation; glycolysis; pyruvate from D-glyceraldehyde 3-phosphate: step 1/5. This is Glyceraldehyde-3-phosphate dehydrogenase (gap) from Pyrococcus abyssi (strain GE5 / Orsay).